Reading from the N-terminus, the 129-residue chain is Large ribosomal subunit protein bL19 (129 aa).

Belongs to the bacterial ribosomal protein bL19 family.

Functionally, this protein is located at the 30S-50S ribosomal subunit interface and may play a role in the structure and function of the aminoacyl-tRNA binding site. This is Large ribosomal subunit protein bL19 from Granulibacter bethesdensis (strain ATCC BAA-1260 / CGDNIH1).